The primary structure comprises 636 residues: Putative ankyrin repeat protein L766 (636 aa).

11 ANK repeats span residues 63 to 97, 99 to 129, 130 to 159, 161 to 190, 230 to 259, 261 to 284, 322 to 355, 372 to 400, 425 to 455, 517 to 546, and 548 to 575; these read NNYL…DYEL, STCH…YIDS, FGNI…FFNC, YYYL…KSNN, FDEK…NYDF, TIIN…YLTD, SRII…KTSI, NPDE…NIPD, DSLE…DTTI, NSIE…NDNN, and LSWA…DIYQ.

The sequence is that of Putative ankyrin repeat protein L766 from Acanthamoeba polyphaga mimivirus (APMV).